A 984-amino-acid chain; its full sequence is Protein translocase subunit SecA (984 aa).

ATP-binding positions include Gln96, 114–118 (GEGKT), and Asp595. Composition is skewed to basic and acidic residues over residues 930–942 (EHEEEKKHQRLLE) and 952–971 (KSDKKPRPKTLKERLKEERL). The disordered stretch occupies residues 930–984 (EHEEEKKHQRLLEEAELQGVQGKSDKKPRPKTLKERLKEERLRKRKLKAKKKEQE). Over residues 972-984 (RKRKLKAKKKEQE) the composition is skewed to basic residues.

The protein belongs to the SecA family. As to quaternary structure, monomer and homodimer. Part of the essential Sec protein translocation apparatus which comprises SecA, SecYEG and auxiliary proteins SecDF. Other proteins may also be involved.

It localises to the cell inner membrane. Its subcellular location is the cytoplasm. It carries out the reaction ATP + H2O + cellular proteinSide 1 = ADP + phosphate + cellular proteinSide 2.. In terms of biological role, part of the Sec protein translocase complex. Interacts with the SecYEG preprotein conducting channel. Has a central role in coupling the hydrolysis of ATP to the transfer of proteins into and across the cell membrane, serving as an ATP-driven molecular motor driving the stepwise translocation of polypeptide chains across the membrane. The sequence is that of Protein translocase subunit SecA from Aquifex aeolicus (strain VF5).